The chain runs to 202 residues: Flagellar transcriptional regulator FlhC (202 aa).

Residues cysteine 137, cysteine 140, cysteine 157, and cysteine 160 each contribute to the Zn(2+) site.

It belongs to the FlhC family. Heterohexamer composed of two FlhC and four FlhD subunits. Each FlhC binds a FlhD dimer, forming a heterotrimer, and a hexamer assembles by dimerization of two heterotrimers. Requires Zn(2+) as cofactor.

The protein localises to the cytoplasm. Functionally, functions in complex with FlhD as a master transcriptional regulator that regulates transcription of several flagellar and non-flagellar operons by binding to their promoter region. Activates expression of class 2 flagellar genes, including fliA, which is a flagellum-specific sigma factor that turns on the class 3 genes. Also regulates genes whose products function in a variety of physiological pathways. This chain is Flagellar transcriptional regulator FlhC, found in Variovorax paradoxus (strain S110).